A 486-amino-acid chain; its full sequence is Betaine aldehyde dehydrogenase (486 aa).

Residues Thr23 and Asp90 each contribute to the K(+) site. An NAD(+)-binding site is contributed by 147–149; sequence GAW. The active-site Charge relay system is Lys159. Residues 173–176 and 226–229 each bind NAD(+); these read KPSE and ESGT. Residue Leu241 participates in K(+) binding. Glu247 functions as the Proton acceptor in the catalytic mechanism. The NAD(+) site is built by Gly249, Cys281, and Glu382. Cys281 functions as the Nucleophile in the catalytic mechanism. Residue Cys281 is modified to Cysteine sulfenic acid (-SOH). Residues Lys452 and Gly455 each contribute to the K(+) site. The active-site Charge relay system is the Glu459.

The protein belongs to the aldehyde dehydrogenase family. In terms of assembly, dimer of dimers. K(+) is required as a cofactor.

The enzyme catalyses betaine aldehyde + NAD(+) + H2O = glycine betaine + NADH + 2 H(+). Its pathway is amine and polyamine biosynthesis; betaine biosynthesis via choline pathway; betaine from betaine aldehyde: step 1/1. Its function is as follows. Involved in the biosynthesis of the osmoprotectant glycine betaine. Catalyzes the irreversible oxidation of betaine aldehyde to the corresponding acid. This Vibrio campbellii (strain ATCC BAA-1116) protein is Betaine aldehyde dehydrogenase.